The sequence spans 847 residues: Alanine--tRNA ligase (847 aa).

Residues H554, H558, C656, and H660 each coordinate Zn(2+).

This sequence belongs to the class-II aminoacyl-tRNA synthetase family. Zn(2+) is required as a cofactor.

The protein localises to the cytoplasm. It catalyses the reaction tRNA(Ala) + L-alanine + ATP = L-alanyl-tRNA(Ala) + AMP + diphosphate. In terms of biological role, catalyzes the attachment of alanine to tRNA(Ala) in a two-step reaction: alanine is first activated by ATP to form Ala-AMP and then transferred to the acceptor end of tRNA(Ala). Also edits incorrectly charged Ser-tRNA(Ala) and Gly-tRNA(Ala) via its editing domain. The sequence is that of Alanine--tRNA ligase from Helicobacter pylori (strain ATCC 700392 / 26695) (Campylobacter pylori).